A 602-amino-acid chain; its full sequence is MSEHHSKRALSLDDLVNHDENDKSKLQKLADNESSVRSDDNRPGAIENIVNGNNSNSDLNSNGVIEEDTDTDDDVGGEFTFDNGITFDYDKQDRFSPEKKRIQARKKDTSKTTPSISNESPSNSKESSVPVDPLSSNISATDRKDSSEEKPDLTGPELVKEPDTNEYKRPSIQSITNAEDTTYNDHKAAGMEKTSNKHSLPNILSDSIDETVTEEHKPKTETEQTITEYQQENKQKDNVNESNSEETHDIKNDNMNQVEKIFQEKTSTLSKKNSVKKDLELLNEISASSKPNKYKNTPIWAQKWKPTVKALQNIDTNDFKIDNSILDIIPDDDLTKSVQDWVYATLYSIDPDLRPFIELEMKFGVLLESKSPDRVNPPVSSQAVYTDMDAHLTPNVDETVFKELSKYIQSLSEITENAGKFNVIEAQTKDAVYRVGTSTQRPRFLRMSSDVKTGRIGAFIEKRHISQLLIYSPKDSYDVKLSINLELPVPENDPPEKYQHQTPVSERTKERVSYIHNDSCTRFDITKVQNHNKGIKSNDVEITHEIELEINTPALIKAFDNIMTDSKEYATLIRTFLNNGTIVRRKLSSLSYEIFEGQKKIQ.

Residues 1–249 (MSEHHSKRAL…NESNSEETHD (249 aa)) are disordered. The span at 15-42 (LVNHDENDKSKLQKLADNESSVRSDDNR) shows a compositional bias: basic and acidic residues. The span at 48–64 (NIVNGNNSNSDLNSNGV) shows a compositional bias: low complexity. Positions 65 to 76 (IEEDTDTDDDVG) are enriched in acidic residues. Positions 88 to 110 (DYDKQDRFSPEKKRIQARKKDTS) are enriched in basic and acidic residues. Low complexity predominate over residues 114-128 (PSISNESPSNSKESS). Basic and acidic residues predominate over residues 141–169 (TDRKDSSEEKPDLTGPELVKEPDTNEYKR). The span at 171 to 181 (SIQSITNAEDT) shows a compositional bias: polar residues. Composition is skewed to basic and acidic residues over residues 213-222 (TEEHKPKTET) and 231-249 (QENK…ETHD). Lysine 276 acts as the N6-GMP-lysine intermediate in catalysis.

This sequence belongs to the fungal TPase family. Heterodimer. The mRNA-capping enzyme is composed of two separate chains alpha and beta, respectively a mRNA guanylyltransferase and an mRNA 5'-triphosphate monophosphatase. Mg(2+) serves as cofactor.

Its subcellular location is the nucleus. It catalyses the reaction a 5'-end triphospho-ribonucleoside in mRNA + H2O = a 5'-end diphospho-ribonucleoside in mRNA + phosphate + H(+). Functionally, first step of mRNA capping. Converts the 5'-triphosphate end of a nascent mRNA chain into a diphosphate end. The sequence is that of mRNA-capping enzyme subunit beta (CET1) from Candida glabrata (strain ATCC 2001 / BCRC 20586 / JCM 3761 / NBRC 0622 / NRRL Y-65 / CBS 138) (Yeast).